The chain runs to 283 residues: Undecaprenyl-diphosphatase (283 aa).

The next 6 helical transmembrane spans lie at 47–67, 94–114, 127–147, 197–217, 227–247, and 261–281; these read PGLSVTAVIQLGSIVAVIAYF, LGIAMLIGTLPILIAGLCIKL, VPAIAVVSIVMALLLGFAELL, AARFSFLLGIPAITIAGLVEL, GGVLPVFVGICSAAVVSWLAI, and IFVVYRLLFGVLLLVWWSGSA.

This sequence belongs to the UppP family.

It is found in the cell inner membrane. The catalysed reaction is di-trans,octa-cis-undecaprenyl diphosphate + H2O = di-trans,octa-cis-undecaprenyl phosphate + phosphate + H(+). Functionally, catalyzes the dephosphorylation of undecaprenyl diphosphate (UPP). Confers resistance to bacitracin. This chain is Undecaprenyl-diphosphatase, found in Synechococcus sp. (strain CC9311).